We begin with the raw amino-acid sequence, 462 residues long: ATP synthase subunit beta (462 aa).

149-156 contributes to the ATP binding site; sequence GGAGVGKT.

It belongs to the ATPase alpha/beta chains family. In terms of assembly, F-type ATPases have 2 components, CF(1) - the catalytic core - and CF(0) - the membrane proton channel. CF(1) has five subunits: alpha(3), beta(3), gamma(1), delta(1), epsilon(1). CF(0) has three main subunits: a(1), b(2) and c(9-12). The alpha and beta chains form an alternating ring which encloses part of the gamma chain. CF(1) is attached to CF(0) by a central stalk formed by the gamma and epsilon chains, while a peripheral stalk is formed by the delta and b chains.

The protein resides in the cell inner membrane. The catalysed reaction is ATP + H2O + 4 H(+)(in) = ADP + phosphate + 5 H(+)(out). In terms of biological role, produces ATP from ADP in the presence of a proton gradient across the membrane. The catalytic sites are hosted primarily by the beta subunits. This is ATP synthase subunit beta from Fusobacterium nucleatum subsp. nucleatum (strain ATCC 25586 / DSM 15643 / BCRC 10681 / CIP 101130 / JCM 8532 / KCTC 2640 / LMG 13131 / VPI 4355).